We begin with the raw amino-acid sequence, 828 residues long: Periplasmic nitrate reductase (828 aa).

Positions 1 to 32 (MNLSRRDFMKTNAAVAAAAVAGLAIPVKNVEA) form a signal peptide, tat-type signal. Residues 38–94 (IKWDKAPCRFCGTGCSVLVGTQNGRVVASQGDPDADVNRGLNCIKGYFLPKIMYGKD) enclose the 4Fe-4S Mo/W bis-MGD-type domain. Residues cysteine 45, cysteine 48, cysteine 52, and cysteine 80 each contribute to the [4Fe-4S] cluster site. Mo-bis(molybdopterin guanine dinucleotide) contacts are provided by residues lysine 82, glutamine 149, asparagine 174, cysteine 178, 211 to 218 (WGSNMAEM), 242 to 246 (STFEH), 261 to 263 (QSD), methionine 372, glutamine 376, asparagine 482, 508 to 509 (SD), lysine 531, aspartate 558, and 718 to 727 (TGRVLEHWHT). Phenylalanine 794 is a binding site for substrate. Positions 802 and 819 each coordinate Mo-bis(molybdopterin guanine dinucleotide).

Belongs to the prokaryotic molybdopterin-containing oxidoreductase family. NasA/NapA/NarB subfamily. In terms of assembly, component of the periplasmic nitrate reductase NapAB complex composed of NapA and NapB. The cofactor is [4Fe-4S] cluster. Mo-bis(molybdopterin guanine dinucleotide) serves as cofactor. Predicted to be exported by the Tat system. The position of the signal peptide cleavage has not been experimentally proven.

It is found in the periplasm. It carries out the reaction 2 Fe(II)-[cytochrome] + nitrate + 2 H(+) = 2 Fe(III)-[cytochrome] + nitrite + H2O. Functionally, catalytic subunit of the periplasmic nitrate reductase complex NapAB. Receives electrons from NapB and catalyzes the reduction of nitrate to nitrite. The chain is Periplasmic nitrate reductase from Pasteurella multocida (strain Pm70).